The primary structure comprises 188 residues: Ras-related protein Rap-1 (188 aa).

Glycine 12 to serine 19 is a binding site for GTP. The Effector region motif lies at tyrosine 34–tyrosine 42. Residues aspartate 59 to threonine 63 and asparagine 118 to aspartate 121 each bind GTP. Cysteine 185 carries the cysteine methyl ester modification. Cysteine 185 carries S-geranylgeranyl cysteine lipidation. A propeptide spans isoleucine 186–leucine 188 (removed in mature form).

The protein belongs to the small GTPase superfamily. Ras family.

It is found in the cell membrane. The catalysed reaction is GTP + H2O = GDP + phosphate + H(+). This Physarum polycephalum (Slime mold) protein is Ras-related protein Rap-1 (RAP1).